A 300-amino-acid polypeptide reads, in one-letter code: Protoheme IX farnesyltransferase (300 aa).

The next 9 helical transmembrane spans lie at 24–44 (VTQL…PGMV), 48–68 (VLIG…AINC), 94–114 (PQIL…LYTF), 118–138 (LTMW…TLLL), 146–166 (IVIG…AVTG), 172–192 (AWIL…VLAL), 217–237 (LHIL…FISG), 239–259 (SGAV…AYAW), and 278–298 (IVYL…RPLL).

The protein belongs to the UbiA prenyltransferase family. Protoheme IX farnesyltransferase subfamily.

Its subcellular location is the cell inner membrane. The catalysed reaction is heme b + (2E,6E)-farnesyl diphosphate + H2O = Fe(II)-heme o + diphosphate. It functions in the pathway porphyrin-containing compound metabolism; heme O biosynthesis; heme O from protoheme: step 1/1. In terms of biological role, converts heme B (protoheme IX) to heme O by substitution of the vinyl group on carbon 2 of heme B porphyrin ring with a hydroxyethyl farnesyl side group. The sequence is that of Protoheme IX farnesyltransferase from Burkholderia vietnamiensis (strain G4 / LMG 22486) (Burkholderia cepacia (strain R1808)).